Consider the following 126-residue polypeptide: uncharacterized protein (126 aa).

The region spanning 8-106 (ISVEATLEVI…WGANHINRVY (99 aa)) is the HTH hxlR-type domain.

This is an uncharacterized protein from Bacillus subtilis (strain 168).